The following is a 349-amino-acid chain: Insulin gene enhancer protein ISL-1 (349 aa).

LIM zinc-binding domains lie at 17–70 (CVGC…CKRD) and 79–133 (CAKC…RADH). Positions 181–240 (TTRVRTVLNEKQLHTLRTCYAANPRPDALMKEQLVEMTGLSPRVIRVWFQNKRCKDKKRS) form a DNA-binding region, homeobox. Residues 312–349 (VNFSEGGPGSNSTGSEVASMSSQLPDTPNSMVASPIEA) are disordered. Positions 321–343 (SNSTGSEVASMSSQLPDTPNSMV) are enriched in polar residues.

It localises to the nucleus. Functionally, acts as a transcriptional regulator. Recognizes and binds to the consensus octamer binding site 5'-ATAATTAA-3' in promoter of target genes. Plays a fundamental role in the gene regulatory network essential for retinal ganglion cell (RGC) differentiation. Binds to insulin gene enhancer sequences. Defines subclasses of motoneurons that segregate into columns in the spinal cord and select distinct axon pathways. Acts in conjunction with LHX1, LHX3 and ISL2. Binds to insulin gene enhancer sequences. Essential for heart development. This is Insulin gene enhancer protein ISL-1 (ISL1) from Gallus gallus (Chicken).